The primary structure comprises 132 residues: Small ribosomal subunit protein uS8 (132 aa).

The protein belongs to the universal ribosomal protein uS8 family. In terms of assembly, part of the 30S ribosomal subunit. Contacts proteins S5 and S12.

Its function is as follows. One of the primary rRNA binding proteins, it binds directly to 16S rRNA central domain where it helps coordinate assembly of the platform of the 30S subunit. The polypeptide is Small ribosomal subunit protein uS8 (Beijerinckia indica subsp. indica (strain ATCC 9039 / DSM 1715 / NCIMB 8712)).